Here is a 1337-residue protein sequence, read N- to C-terminus: Protein cordon-bleu (1337 aa).

The tract at residues 1–41 is disordered; that stretch reads MDAPRALAAKPPTGRKMKARAPPPPGKPAAQNVHSEQKLPH. Phosphoserine is present on residues serine 47, serine 50, serine 212, serine 235, serine 272, and serine 294. 2 disordered regions span residues 260 to 556 and 647 to 768; these read SKAE…NDDE and IASQ…HHGQ. The segment covering 288 to 317 has biased composition (polar residues); that stretch reads CVTTPNSPSLHSRSLTLGPSLSLGNISGVS. Positions 323–328 match the KKRRAP 1 motif; it reads KKRRAP. 2 positions are modified to phosphoserine: serine 346 and serine 349. The KKRRAP 2 motif lies at 356-361; sequence KKRRAP. Positions 361-374 are enriched in pro residues; the sequence is PAPPPPQQPPPSPV. Serine 372 is subject to Phosphoserine. A compositionally biased stretch (basic and acidic residues) spans 377-387; that stretch reads NRKEDKEENRK. Over residues 411–423 the composition is skewed to pro residues; sequence LVLPPPPPYPPPD. Residues 469-480 are compositionally biased toward acidic residues; it reads ESEETASEDTTE. Polar residues predominate over residues 484–500; sequence VMSSPSDAISLDSQQDS. Threonine 522 carries the post-translational modification Phosphothreonine. The span at 526-541 shows a compositional bias: low complexity; that stretch reads GPQKSPSWGKSGSGSS. Polar residues-rich tracts occupy residues 647–666 and 687–710; these read IASQRSHLSPSQTEHSQPFV and QPTLANTSENENPVETDPTVTSLV. Serine 649 carries the post-translational modification Phosphoserine. Basic and acidic residues predominate over residues 714-736; the sequence is LIDDPKAKDKGKVHGSSHSEKTQ. A Phosphoserine modification is found at serine 816. Disordered regions lie at residues 892–923 and 967–991; these read TPQQQPASQEYGAHLEEERSRPQSAVSCSVKV and KATTEQCHEEAKLARSPPTRKDDAA. Serine 1038 is subject to Phosphoserine. Residues 1070–1090 are compositionally biased toward polar residues; it reads GFNEKQTTSNQKANSTSNFSQ. Disordered stretches follow at residues 1070-1094, 1113-1133, 1145-1168, and 1192-1221; these read GFNEKQTTSNQKANSTSNFSQALDK, MNGSARTPGNCEPPHSPKEST, KPSSLSTDGQDADDTLPSSIFGPK, and AIHSSGGREKLRKTAEQTSEGRPKKPSYVE. Serine 1128 carries the post-translational modification Phosphoserine. WH2 domains are found at residues 1185–1205 and 1225–1245; these read LHSALMEAIHSSGGREKLRKT and ERSALLAAIRGHSGTLSLRKV. Positions 1197–1214 are enriched in basic and acidic residues; the sequence is GGREKLRKTAEQTSEGRP. The segment at 1262–1310 is disordered; it reads GAPGLDKPQQEDLGLPPPPALPPPPAPAPQAPSASVTVSRFSTGTPSNS. Over residues 1276 to 1291 the composition is skewed to pro residues; sequence LPPPPALPPPPAPAPQ. Positions 1297–1310 are enriched in polar residues; that stretch reads VTVSRFSTGTPSNS. Position 1303 is a phosphoserine (serine 1303). The region spanning 1313–1333 is the WH2 3 domain; that stretch reads ARQALMDAIRSGTGAARLRKV.

Identified in a complex composed of COBL, PACSIN1 and WASL. Interacts with PACSIN1, PACSIN2 and PACSIN3. Identified in a complex composed of ACTA1, COBL, GSN and TMSB4X. Interacts (via WH2 domains) with actin monomers. Interacts with DBNL. As to expression, detected in brain cortex and in the Purkinje cell layer in the cerebellum. Detected in hippocampus neurons, and at lower levels in testis, lung and spleen (at protein level). Detected in embryonic neural tube.

The protein localises to the cell membrane. Its subcellular location is the cytoplasm. It is found in the cytoskeleton. The protein resides in the cell projection. It localises to the ruffle. Functionally, plays an important role in the reorganization of the actin cytoskeleton. Binds to and sequesters actin monomers (G actin). Nucleates actin polymerization by assembling three actin monomers in cross-filament orientation and thereby promotes growth of actin filaments at the barbed end. Can also mediate actin depolymerization at barbed ends and severing of actin filaments. Promotes formation of cell ruffles. Regulates neuron morphogenesis and increases branching of axons and dendrites. Regulates dendrite branching in Purkinje cells. This is Protein cordon-bleu (Cobl) from Mus musculus (Mouse).